We begin with the raw amino-acid sequence, 419 residues long: MVEIDPFEMAVKQLERAAQYMDISEEALEWLKKPMRIVEVSVPIEMDDGSVKVFTGFRVQHNWARGPTKGGIRWHPAETLSTVKALATWMTWKVAVVDLPYGGGKGGIIVNPKELSEREQERLARAYIRAVYDVIGPWTDIPAPDVYTNPKIMGWMMDEYETIMRRKGPAFGVITGKPLSIGGSLGRGTATAQGAIFTIREAAKALGIDLKGKKIAVQGYGNAGYYTAKLAKEQLGMTVVAVSDSRGGIYNPDGLDPDEVLKWKREHGSVKDFPGATNITNEELLELEVDVLAPAAIEEVITEKNADNIKAKIVAEVANGPVTPEADDILREKGILQIPDFLCNAGGVTVSYFEWVQNINGYYWTEEEVREKLDKKMTKAFWEVYNTHKDKNIHMRDAAYVVAVSRVYQAMKDRGWVKK.

Lysine 105 is an active-site residue. NAD(+) is bound at residue 219–225; it reads GYGNAGY.

The protein belongs to the Glu/Leu/Phe/Val dehydrogenases family. Homohexamer.

The catalysed reaction is L-glutamate + NAD(+) + H2O = 2-oxoglutarate + NH4(+) + NADH + H(+). It carries out the reaction L-glutamate + NADP(+) + H2O = 2-oxoglutarate + NH4(+) + NADPH + H(+). This Thermococcus profundus protein is Glutamate dehydrogenase (gdhA).